Reading from the N-terminus, the 704-residue chain is Transcription factor HNF-4 homolog (704 aa).

The segment at Ser-93–Gln-133 is disordered. Positions Ser-100–Gln-133 are enriched in low complexity. The nuclear receptor DNA-binding region spans Pro-139 to Asn-214. NR C4-type zinc fingers lie at residues Cys-142–Cys-162 and Cys-178–Cys-197. An NR LBD domain is found at Gly-232–Gly-470. 3 disordered regions span residues Asp-474 to Ser-520, Pro-563 to His-624, and Pro-684 to Tyr-704. The span at Asp-487–Thr-512 shows a compositional bias: polar residues. Low complexity predominate over residues Pro-563 to Pro-574. Over residues Gly-608–Pro-620 the composition is skewed to polar residues.

It belongs to the nuclear hormone receptor family. NR2 subfamily. Homodimer. In terms of tissue distribution, in third instar larvae, expressed at high levels in midgut and attached gastric caeca, fat body, Malpighian tubules and oenocytes, and at lower levels in proventriculus, salivary glands, epidermis, brain and ring gland. Not detected in imaginal disks and the median neurosecretory cells that produce insulin-like peptides (at protein level). In developing embryos, expressed in mid-gut, fat bodies and the distal region of Malpighian tubules.

It localises to the nucleus. Transcriptionally controlled transcription factor. Important for the differentiation of various specialized cell types that arise from both endoderm and mesoderm. May have a role in early gut formation. Plays an essential role in lipid catabolism, regulating lipid mobilization and beta-oxidation in response to nutrient deprivation. The polypeptide is Transcription factor HNF-4 homolog (Hnf4) (Drosophila melanogaster (Fruit fly)).